The primary structure comprises 81 residues: LYR motif-containing protein 4 (81 aa).

It belongs to the complex I LYR family.

The protein localises to the mitochondrion. It is found in the nucleus. Its pathway is cofactor biosynthesis; iron-sulfur cluster biosynthesis. Functionally, required for nuclear and mitochondrial iron-sulfur protein biosynthesis. This Dictyostelium discoideum (Social amoeba) protein is LYR motif-containing protein 4 (lyrm4).